Reading from the N-terminus, the 307-residue chain is Ornithine carbamoyltransferase (307 aa).

Residues serine 50–threonine 53, glutamine 77, arginine 101, and histidine 128–glutamine 131 each bind carbamoyl phosphate. L-ornithine is bound by residues asparagine 160, aspartate 224, and serine 228–methionine 229. Carbamoyl phosphate-binding positions include cysteine 264 to leucine 265 and arginine 292.

Belongs to the aspartate/ornithine carbamoyltransferase superfamily. OTCase family.

It is found in the cytoplasm. It catalyses the reaction carbamoyl phosphate + L-ornithine = L-citrulline + phosphate + H(+). The protein operates within amino-acid biosynthesis; L-arginine biosynthesis; L-arginine from L-ornithine and carbamoyl phosphate: step 1/3. In terms of biological role, reversibly catalyzes the transfer of the carbamoyl group from carbamoyl phosphate (CP) to the N(epsilon) atom of ornithine (ORN) to produce L-citrulline. This Clavibacter sepedonicus (Clavibacter michiganensis subsp. sepedonicus) protein is Ornithine carbamoyltransferase.